Consider the following 90-residue polypeptide: Evasin P1128 (90 aa).

Residues 1 to 18 (MFIALGIQLFVAVTYAAG) form the signal peptide. 3 cysteine pairs are disulfide-bonded: C29–C51, C33–C53, and C44–C64. N32 is a glycosylation site (N-linked (GlcNAc...) asparagine).

The protein resides in the secreted. Its function is as follows. Salivary chemokine-binding protein which binds to host chemokines CXCL1, CXCL2, CXCL3, CXCL5 and CXCL8. This is Evasin P1128 from Ixodes ricinus (Common tick).